We begin with the raw amino-acid sequence, 431 residues long: Na(+)-translocating NADH-quinone reductase subunit F (431 aa).

A helical transmembrane segment spans residues 10-30; the sequence is ISIASLVFCVIGLILSGVILI. Positions 41 to 133 constitute a 2Fe-2S ferredoxin-type domain; the sequence is CKLKINNDDS…DMNLEIEERY (93 aa). [2Fe-2S] cluster-binding residues include Cys-76, Cys-82, Cys-85, and Cys-117. Residues 136-286 enclose the FAD-binding FR-type domain; that stretch reads ASSWEGTVVS…SGPYGESFMK (151 aa).

Belongs to the NqrF family. As to quaternary structure, composed of six subunits; NqrA, NqrB, NqrC, NqrD, NqrE and NqrF. It depends on [2Fe-2S] cluster as a cofactor. Requires FAD as cofactor.

It is found in the cell inner membrane. It carries out the reaction a ubiquinone + n Na(+)(in) + NADH + H(+) = a ubiquinol + n Na(+)(out) + NAD(+). In terms of biological role, NQR complex catalyzes the reduction of ubiquinone-1 to ubiquinol by two successive reactions, coupled with the transport of Na(+) ions from the cytoplasm to the periplasm. The first step is catalyzed by NqrF, which accepts electrons from NADH and reduces ubiquinone-1 to ubisemiquinone by a one-electron transfer pathway. The sequence is that of Na(+)-translocating NADH-quinone reductase subunit F from Chlamydia felis (strain Fe/C-56) (Chlamydophila felis).